A 675-amino-acid polypeptide reads, in one-letter code: Zinc finger protein 526 (675 aa).

3 consecutive C2H2-type zinc fingers follow at residues 56–78, 108–130, and 140–163; these read FMCS…QEQH, FQCG…QDAH, and YQCG…KTQH. Residues 160-195 are disordered; sequence KTQHLSSAADEPPSPLPPPTPPPPPPPPPPPPPPEV. Residues 171-194 show a composition bias toward pro residues; sequence PPSPLPPPTPPPPPPPPPPPPPPE. A C2H2-type 4 zinc finger spans residues 200-222; that stretch reads YECPECSTLCATPEEFLEHQGTH. Positions 225–234 are enriched in basic and acidic residues; sequence SLEKEEHNGL. The segment at 225–283 is disordered; it reads SLEKEEHNGLEEEEEDEEEGEEEEDDDDEETDEEEASSELTADDTGSNKSTADSAQSCG. Acidic residues predominate over residues 235–261; the sequence is EEEEEDEEEGEEEEDDDDEETDEEEAS. The span at 269 to 281 shows a compositional bias: polar residues; it reads TGSNKSTADSAQS. C2H2-type zinc fingers lie at residues 312 to 334, 339 to 361, 367 to 389, and 395 to 416; these read FHCS…GRAH, HECT…QRLH, YLCV…RRAH, and HRCR…RRTH. The segment at 415–439 is disordered; the sequence is THTGKSGTPTRVATVSPAPAEPTPP. Residues 418-427 are compositionally biased toward polar residues; the sequence is GKSGTPTRVA. 5 consecutive C2H2-type zinc fingers follow at residues 447–470, 477–499, 505–527, 533–555, and 578–600; these read LPCP…RAVH, HRCG…LRTH, FQCH…QLTH, YQCL…RRLH, and YYCG…QRVH. The interval 606 to 625 is disordered; it reads LTLQPPRSPSPVPPPPPEPQ. Pro residues predominate over residues 611–624; that stretch reads PRSPSPVPPPPPEP.

Belongs to the krueppel C2H2-type zinc-finger protein family.

The protein localises to the nucleus. May be involved in transcriptional regulation. This is Zinc finger protein 526 (Znf526) from Mus musculus (Mouse).